The chain runs to 1005 residues: Espin-like protein (1005 aa).

ANK repeat units lie at residues 1–31 (MEAQQALVASKDGDMATLERLFEAGALRPDI), 35–64 (LGAGLVHHATRAGHLDCVKFLVQRAKLPGN), 69–99 (NGATPVHDAAATGNLAELCWLVRDAGCGLQD), 103–132 (SGVSPLHLAARFGHPALVEWLLREGHAATL), 136–166 (EGALPLHHAAVSGDLTCLKLLTAAHSSGVNQ), 170–200 (SGASPLYLACQEGHLHLAQFLVKDCGADVRL), 204–234 (DGMSSLHAAAAHGHYSLVVWLVTFTDIGLTA), 238–267 (EGATALHFAARGGHTPILDRLLLMGAPIMR), 270–299 (WGGTPLHDAAENGHMECCQTLLSHHVDPFL), and 303–332 (DGYTAIDLAEYHGHQDCAQFLREMSRPVRV). Disordered stretches follow at residues 355 to 383 (EERRGDSGLKSPSSATLSPVWPAQPVPRE) and 458 to 480 (ADHPPEDQDQSQRQDSGPTAAEQ). Residues 458–469 (ADHPPEDQDQSQ) are compositionally biased toward basic and acidic residues. Positions 502 to 539 (EDDLVYLEKQINDLQLRRRCQEYESELGRLAAQLQALL) form a coiled coil. Disordered stretches follow at residues 611–643 (LAQGEEKPPSPVPQDLGKETIAGPSRSEAQREI), 692–729 (PRGDAMGGEPGPGDTEEASDSGISCEEAPSEAGAGPGL), 764–794 (LEAQRARSRGPEAAGSPRPSSPQPSDGPRLG), and 951–975 (PHASLPGSGPEPAVPPRLGSDSQGS).

Interacts with MYO3A (via C-terminus). Interacts with MYO3B (via C-terminus). As to expression, expressed in inner ear hair cells. Expressed in utricle hair bundles (at protein level). Expressed in choclea (at protein level).

The protein localises to the cell projection. The protein resides in the stereocilium. Binds to but does not cross-link actin. Required for the formation and maintenance of inner ear hair cell stereocilia and staircase formation. Essential for normal hearing. The protein is Espin-like protein (Espnl) of Mus musculus (Mouse).